Reading from the N-terminus, the 396-residue chain is dTDP-epi-vancosaminyltransferase (396 aa).

S10–G12 lines the dTDP-beta-L-4-epi-vancosamine pocket. Positions 127, 133, 141, and 169 each coordinate devancoaminyl-vancomycin. Residues R207, S230, E277–V278, and H293–T298 contribute to the dTDP-beta-L-4-epi-vancosamine site.

This sequence belongs to the glycosyltransferase 28 family.

It catalyses the reaction dTDP-beta-L-4-epi-vancosamine + devancoaminyl-vancomycin = chloroorienticin B + dTDP + H(+). It participates in antibiotic biosynthesis; vancomycin biosynthesis. In terms of biological role, catalyzes the attachment of 4-epi-vancosamine from a TDP donor to the beta-OH-Tyr-6 of the aglycone cosubstrate in the biosynthesis of glycopeptide antibiotic chloroeremomycin, a member of the vancomycin group of antibiotics. Strongly prefers devancoaminyl-vancomycin (DVV) as substrate rather than the heptapeptide vancomycin aglycone (AGV). Acts downstream of GtfB. The chain is dTDP-epi-vancosaminyltransferase (gtfA) from Amycolatopsis orientalis (Nocardia orientalis).